The chain runs to 282 residues: 2-dehydro-3-deoxyphosphooctonate aldolase (282 aa).

It belongs to the KdsA family.

The protein resides in the cytoplasm. The enzyme catalyses D-arabinose 5-phosphate + phosphoenolpyruvate + H2O = 3-deoxy-alpha-D-manno-2-octulosonate-8-phosphate + phosphate. It functions in the pathway carbohydrate biosynthesis; 3-deoxy-D-manno-octulosonate biosynthesis; 3-deoxy-D-manno-octulosonate from D-ribulose 5-phosphate: step 2/3. Its pathway is bacterial outer membrane biogenesis; lipopolysaccharide biosynthesis. The protein is 2-dehydro-3-deoxyphosphooctonate aldolase of Shewanella piezotolerans (strain WP3 / JCM 13877).